We begin with the raw amino-acid sequence, 59 residues long: Large ribosomal subunit protein bL32 (59 aa).

The span at 1-16 (MAVPKRKTSPSKRGMR) shows a compositional bias: basic residues. The disordered stretch occupies residues 1 to 59 (MAVPKRKTSPSKRGMRRSADALKAPTYVEDKNSGELRRPHHIDLKSGMYRGRQVLEAKE). The span at 28 to 44 (VEDKNSGELRRPHHIDL) shows a compositional bias: basic and acidic residues.

Belongs to the bacterial ribosomal protein bL32 family.

In Brucella anthropi (strain ATCC 49188 / DSM 6882 / CCUG 24695 / JCM 21032 / LMG 3331 / NBRC 15819 / NCTC 12168 / Alc 37) (Ochrobactrum anthropi), this protein is Large ribosomal subunit protein bL32.